The sequence spans 156 residues: ATP synthase subunit b (156 aa).

A helical membrane pass occupies residues 7–26 (LIGQLIAFALFVAFCMKYVW).

It belongs to the ATPase B chain family. In terms of assembly, F-type ATPases have 2 components, F(1) - the catalytic core - and F(0) - the membrane proton channel. F(1) has five subunits: alpha(3), beta(3), gamma(1), delta(1), epsilon(1). F(0) has three main subunits: a(1), b(2) and c(10-14). The alpha and beta chains form an alternating ring which encloses part of the gamma chain. F(1) is attached to F(0) by a central stalk formed by the gamma and epsilon chains, while a peripheral stalk is formed by the delta and b chains.

Its subcellular location is the cell inner membrane. Its function is as follows. F(1)F(0) ATP synthase produces ATP from ADP in the presence of a proton or sodium gradient. F-type ATPases consist of two structural domains, F(1) containing the extramembraneous catalytic core and F(0) containing the membrane proton channel, linked together by a central stalk and a peripheral stalk. During catalysis, ATP synthesis in the catalytic domain of F(1) is coupled via a rotary mechanism of the central stalk subunits to proton translocation. In terms of biological role, component of the F(0) channel, it forms part of the peripheral stalk, linking F(1) to F(0). The polypeptide is ATP synthase subunit b (Haemophilus ducreyi (strain 35000HP / ATCC 700724)).